A 392-amino-acid chain; its full sequence is Heavy metal-associated isoprenylated plant protein 6 (392 aa).

Residues 1 to 19 (MGEKKEETATKPQGEKKPT) are compositionally biased toward basic and acidic residues. The tract at residues 1 to 22 (MGEKKEETATKPQGEKKPTDGG) is disordered. Residues 23 to 86 (ITTVVMKLDM…KVADKIKRPV (64 aa)) form the HMA 1 domain. Cd(2+)-binding residues include Cys-34 and Cys-37. Residues 89–157 (VSTVAPPKKE…PPPPKESTVV (69 aa)) are disordered. Positions 106-145 (AEKKPSPAAEEKPAEKKPAAVEKPGEKKEEKKKEEGEKKA) are enriched in basic and acidic residues. The HMA 2 domain maps to 153-216 (ESTVVLKTKL…YLNEKLKRTV (64 aa)). Residues Cys-164 and Cys-167 each contribute to the Cd(2+) site. A compositionally biased stretch (basic and acidic residues) spans 258–270 (KKVDGGGEKKKEV). Disordered stretches follow at residues 258-285 (KKVDGGGEKKKEVAVGGGGGGGGGGGDG) and 350-392 (GQGY…CSVM). Gly residues predominate over residues 272-285 (VGGGGGGGGGGGDG). The residue at position 389 (Cys-389) is a Cysteine methyl ester. Cys-389 carries the S-farnesyl cysteine lipid modification. A propeptide spans 390–392 (SVM) (removed in mature form).

This sequence belongs to the HIPP family. As to expression, expressed in petioles, hypocotyls, peduncles, vascular bundles and root meristems.

Its subcellular location is the cell membrane. Heavy-metal-binding protein. Involved in the maintenance of heavy metal homeostasis and/or in detoxification. In Arabidopsis thaliana (Mouse-ear cress), this protein is Heavy metal-associated isoprenylated plant protein 6.